We begin with the raw amino-acid sequence, 295 residues long: UDP-3-O-acyl-N-acetylglucosamine deacetylase (295 aa).

Zn(2+) contacts are provided by histidine 77, histidine 233, and aspartate 237. Residue histidine 260 is the Proton donor of the active site.

This sequence belongs to the LpxC family. Zn(2+) serves as cofactor.

It catalyses the reaction a UDP-3-O-[(3R)-3-hydroxyacyl]-N-acetyl-alpha-D-glucosamine + H2O = a UDP-3-O-[(3R)-3-hydroxyacyl]-alpha-D-glucosamine + acetate. Its pathway is glycolipid biosynthesis; lipid IV(A) biosynthesis; lipid IV(A) from (3R)-3-hydroxytetradecanoyl-[acyl-carrier-protein] and UDP-N-acetyl-alpha-D-glucosamine: step 2/6. In terms of biological role, catalyzes the hydrolysis of UDP-3-O-myristoyl-N-acetylglucosamine to form UDP-3-O-myristoylglucosamine and acetate, the committed step in lipid A biosynthesis. The protein is UDP-3-O-acyl-N-acetylglucosamine deacetylase of Solibacter usitatus (strain Ellin6076).